Reading from the N-terminus, the 402-residue chain is uncharacterized protein (402 aa).

The protein to M.genitalium MG148.

This is an uncharacterized protein from Caldicellulosiruptor sp. (strain Rt8B.4).